A 585-amino-acid chain; its full sequence is Probable G-protein coupled receptor Mth-like 10 (585 aa).

A signal peptide spans 1–32; the sequence is MPKKIHQPGGSLYCGVTLLGVLCLVVFRLIPG. At 33 to 250 the chain is on the extracellular side; the sequence is IPFGTYVMAE…DHSTVKIINS (218 aa). Disulfide bonds link cysteine 56-cysteine 110, cysteine 112-cysteine 117, cysteine 121-cysteine 216, cysteine 122-cysteine 135, and cysteine 177-cysteine 236. N-linked (GlcNAc...) asparagine glycans are attached at residues asparagine 63 and asparagine 72. N-linked (GlcNAc...) asparagine glycans are attached at residues asparagine 142, asparagine 152, asparagine 157, asparagine 198, and asparagine 223. The helical transmembrane segment at 251–271 threads the bilayer; that stretch reads YAMMFSIPFMMLTIAVYLLIP. Residues 272 to 280 lie on the Cytoplasmic side of the membrane; it reads ELRNQHGKS. Residues 281 to 301 form a helical membrane-spanning segment; that stretch reads LVCYLIGLSVGYSSLCYVQLY. Residues 302 to 312 lie on the Extracellular side of the membrane; the sequence is QVDATGVTCKV. Residues 313 to 333 form a helical membrane-spanning segment; sequence FGYTAYFFFMGAYMWLSVISF. The Cytoplasmic segment spans residues 334–353; it reads DLWHNFRGTRGINRFQEKKR. A helical transmembrane segment spans residues 354–374; the sequence is FLFYSLYSWGIALVFLAFTYC. The Extracellular portion of the chain corresponds to 375 to 404; it reads AQQLTNLPANLKPGIGDGVYCWLDMSNWAA. The chain crosses the membrane as a helical span at residues 405–425; the sequence is MIYFYGPILAIVVANTIMFIM. At 426–466 the chain is on the cytoplasmic side; sequence TAIKIHGVQREMARIIASENSTKNLRTEKDKRFYRAWSNYR. Residues 467–487 form a helical membrane-spanning segment; that stretch reads FGLFLRLFLIMGITWLTELIS. Topologically, residues 488-498 are extracellular; the sequence is YFVGSDKGWSK. The helical transmembrane segment at 499–519 threads the bilayer; the sequence is LFYISDLANAMQGFLIFMLFV. The Cytoplasmic portion of the chain corresponds to 520–585; that stretch reads MKKKVKHLIT…VDPQKTTIFR (66 aa).

This sequence belongs to the G-protein coupled receptor 2 family. Mth subfamily.

The protein resides in the cell membrane. This is Probable G-protein coupled receptor Mth-like 10 (mthl10) from Drosophila melanogaster (Fruit fly).